The chain runs to 184 residues: uncharacterized protein (184 aa).

The N-terminal stretch at 1–20 (MYQLEKIWVLLCLALVGVLG) is a signal peptide.

This is an uncharacterized protein from Drosophila melanogaster (Fruit fly).